The sequence spans 38 residues: Exendin-1 (38 aa).

An O-linked (HexNAc...) serine; in Exendin-1 and Exendin-1b glycan is attached at S32.

This sequence belongs to the glucagon family. Post-translationally, O-linked glycan consists of Hex-HexNAc saccharide. Glycosylation may be of interest for the biological stability of exendin-1 and exendin-1b. As to expression, expressed by the venom gland.

It is found in the secreted. Its function is as follows. O-linked and free exendin-1 and exendin-1b have vasoactive intestinal peptide(VIP)/secretin-like biological activities. They interact with rat and human VIP receptors 1 (VIPR1) and 2 (VIPR2), with the highest affinity for the human VIPR2. They induce hypotension that is mediated by relaxation of cardiac smooth muscle. This chain is Exendin-1, found in Heloderma horridum horridum (Mexican beaded lizard).